The chain runs to 490 residues: Bifunctional protein HldE (490 aa).

The segment at 1 to 330 is ribokinase; the sequence is MERKNVESLF…GSLGFQHGEG (330 aa). Residue 205–208 coordinates ATP; the sequence is NRKE. Asp-275 is a catalytic residue. A cytidylyltransferase region spans residues 356 to 490; sequence FTNGCFDLLH…EKILKAYGEE (135 aa).

This sequence in the N-terminal section; belongs to the carbohydrate kinase PfkB family. It in the C-terminal section; belongs to the cytidylyltransferase family. In terms of assembly, homodimer.

It carries out the reaction D-glycero-beta-D-manno-heptose 7-phosphate + ATP = D-glycero-beta-D-manno-heptose 1,7-bisphosphate + ADP + H(+). It catalyses the reaction D-glycero-beta-D-manno-heptose 1-phosphate + ATP + H(+) = ADP-D-glycero-beta-D-manno-heptose + diphosphate. Its pathway is nucleotide-sugar biosynthesis; ADP-L-glycero-beta-D-manno-heptose biosynthesis; ADP-L-glycero-beta-D-manno-heptose from D-glycero-beta-D-manno-heptose 7-phosphate: step 1/4. It participates in nucleotide-sugar biosynthesis; ADP-L-glycero-beta-D-manno-heptose biosynthesis; ADP-L-glycero-beta-D-manno-heptose from D-glycero-beta-D-manno-heptose 7-phosphate: step 3/4. Catalyzes the phosphorylation of D-glycero-D-manno-heptose 7-phosphate at the C-1 position to selectively form D-glycero-beta-D-manno-heptose-1,7-bisphosphate. Functionally, catalyzes the ADP transfer from ATP to D-glycero-beta-D-manno-heptose 1-phosphate, yielding ADP-D-glycero-beta-D-manno-heptose. This chain is Bifunctional protein HldE, found in Geobacter sulfurreducens (strain ATCC 51573 / DSM 12127 / PCA).